The primary structure comprises 697 residues: Elongation factor G (697 aa).

The tr-type G domain maps to 8–283 (EHIRNIGICA…AVVDFLPSPT (276 aa)). Residues 17-24 (AHIDAGKT), 81-85 (DTPGH), and 135-138 (NKMD) contribute to the GTP site.

It belongs to the TRAFAC class translation factor GTPase superfamily. Classic translation factor GTPase family. EF-G/EF-2 subfamily.

It localises to the cytoplasm. Functionally, catalyzes the GTP-dependent ribosomal translocation step during translation elongation. During this step, the ribosome changes from the pre-translocational (PRE) to the post-translocational (POST) state as the newly formed A-site-bound peptidyl-tRNA and P-site-bound deacylated tRNA move to the P and E sites, respectively. Catalyzes the coordinated movement of the two tRNA molecules, the mRNA and conformational changes in the ribosome. The sequence is that of Elongation factor G from Rickettsia massiliae (strain Mtu5).